A 258-amino-acid chain; its full sequence is Imidazole glycerol phosphate synthase subunit HisF (258 aa).

Active-site residues include aspartate 11 and aspartate 130.

Belongs to the HisA/HisF family. In terms of assembly, heterodimer of HisH and HisF.

The protein resides in the cytoplasm. It carries out the reaction 5-[(5-phospho-1-deoxy-D-ribulos-1-ylimino)methylamino]-1-(5-phospho-beta-D-ribosyl)imidazole-4-carboxamide + L-glutamine = D-erythro-1-(imidazol-4-yl)glycerol 3-phosphate + 5-amino-1-(5-phospho-beta-D-ribosyl)imidazole-4-carboxamide + L-glutamate + H(+). The protein operates within amino-acid biosynthesis; L-histidine biosynthesis; L-histidine from 5-phospho-alpha-D-ribose 1-diphosphate: step 5/9. Functionally, IGPS catalyzes the conversion of PRFAR and glutamine to IGP, AICAR and glutamate. The HisF subunit catalyzes the cyclization activity that produces IGP and AICAR from PRFAR using the ammonia provided by the HisH subunit. The chain is Imidazole glycerol phosphate synthase subunit HisF from Nitrobacter winogradskyi (strain ATCC 25391 / DSM 10237 / CIP 104748 / NCIMB 11846 / Nb-255).